Reading from the N-terminus, the 1173-residue chain is BRCA2-interacting transcriptional repressor EMSY (1173 aa).

The ENT domain occupies 16 to 100 (CKRILRKLEL…EWSIEGRRLV (85 aa)). The span at 149–177 (STTSTPPSASAPSSSSAAVKSPRPASPAS) shows a compositional bias: low complexity. Disordered stretches follow at residues 149 to 179 (STTSTPPSASAPSSSSAAVKSPRPASPASNV), 191 to 216 (KSVSCSDEDEKPRKRRRTSSSSSSPV), 676 to 720 (NRSA…DAPP), 797 to 816 (SAEQRESPEPSGQSAAESDA), 905 to 998 (RVCE…GAQV), 1020 to 1046 (PRAPVSSSSSSEAALKLQAESSSEKPS), and 1139 to 1173 (DYTSQRLDEEQAMEQEVDSSNDEGAAASPSADQSQ). The span at 683 to 693 (TTSTHTSAAAA) shows a compositional bias: low complexity. Low complexity-rich tracts occupy residues 911–921 (SSSSSSSSSSS) and 937–953 (SSSSAPATAASANTPHT). Polar residues-rich tracts occupy residues 961 to 976 (QAPTTHNRPNTHTQLS) and 989 to 998 (SSKTSSGAQV). Residues 1025–1040 (SSSSSSEAALKLQAES) show a composition bias toward low complexity. Over residues 1148 to 1159 (EQAMEQEVDSSN) the composition is skewed to acidic residues.

As to quaternary structure, homodimer.

The protein localises to the nucleus. Its function is as follows. Regulator which is able to repress transcription, possibly via its interaction with a multiprotein chromatin remodeling complex that modifies the chromatin. This is BRCA2-interacting transcriptional repressor EMSY from Danio rerio (Zebrafish).